A 286-amino-acid polypeptide reads, in one-letter code: MLRRNLDERDAQTKQLQDAVTNVEKHFGELCQIFAAYVRKTARLRDKADLLVNEINLYASTETPNLKQGLKDFADEFAKLQDYRQAEVERLEAKVVEPLKAYGTIVKMKRDDLKATLTARNREAKQLSQLERTRQRNPSDRHVISQAETELQRATIDATRTSRHLEETIDNFEKQKIKDIKNILSEFITIEMLFHGKALEVFTAAYQNIQNIDEDEDLEVFRNSLYLSDYPSRLDIVRANSKSPLQRSLSTKCTSGTGQISTCRTRKDQQVEDEDDEELDVTEDEN.

Residues Met-1–Lys-47 constitute a mitochondrion transit peptide. Residues Asp-10–Val-220 form a BAR-like region. Residues Lys-107–Lys-178 are a coiled coil. Residues Gly-258–Asn-286 form a disordered region. Positions Val-271 to Asn-286 are enriched in acidic residues.

This sequence belongs to the CIBAR family. In terms of assembly, homodimer (via BAR-like domain). Heterodimer with FAM92B (via BAR-like domains). Interacts (via BAR-like domain) with CBY1; this interaction is required for targeting FAM92A to centriole and cilium basal body. Interacts (via BAR-like domain) with CBY3; both proteins form a ninefold symmetric structure at the flagellar base; are recruited to the annulus in a mutually dependent manner and regulate annulus positionning. Expressed in the heart, liver, spleen, lung, kidney, brain and muscle (at protein level). Strongly expressed throughout the developing limb bud, including the progress zone and the apical ectodermal ridge.

It is found in the cytoplasm. Its subcellular location is the cytoskeleton. It localises to the microtubule organizing center. The protein resides in the centrosome. The protein localises to the centriole. It is found in the cilium basal body. Its subcellular location is the cell projection. It localises to the cilium. The protein resides in the nucleus. The protein localises to the mitochondrion inner membrane. It is found in the flagellum. Functionally, plays a critical role in regulating mitochondrial ultrastructure and function by maintaining the integrity of mitochondrial morphology, particularly the organization of cristae. Preferentially binds to negatively charged phospholipids like cardiolipin and phosphatidylinositol 4,5-bisphosphate enhancing its interaction with mitochondrial membranes. Induces membrane curvature and tubulation, which are critical for maintaining mitochondrial ultrastructure and the organization of cristae. Plays a crucial role in ciliogenesis. May play a role in limb development through its role in ciliogenesis. Plays a key role in the correct positioning of the annulus, a septin-based ring structure in the sperm flagellum, serving both as a physical barrier and a membrane diffusion barrier that separates the midpiece (MP) from the principal piece (PP). This positioning is essential for proper sperm motility and function. Interacts with CBY3 to form a complex which localizes to the curved membrane region of the flagellar pocket. By doing so, may provide stability and rigidity to the periannular membrane to prevent membrane deformation. This function is crucial for halting annulus migration at the proximal end of the fibrous sheath-containing PP. In Mus musculus (Mouse), this protein is CBY1-interacting BAR domain-containing protein 1.